The following is a 366-amino-acid chain: Chorismate synthase (366 aa).

Positions 48 and 54 each coordinate NADP(+). Residues 125–127, 237–238, glycine 277, 292–296, and arginine 318 each bind FMN; these read RSS, NA, and KPTSS.

It belongs to the chorismate synthase family. In terms of assembly, homotetramer. It depends on FMNH2 as a cofactor.

It carries out the reaction 5-O-(1-carboxyvinyl)-3-phosphoshikimate = chorismate + phosphate. Its pathway is metabolic intermediate biosynthesis; chorismate biosynthesis; chorismate from D-erythrose 4-phosphate and phosphoenolpyruvate: step 7/7. Its function is as follows. Catalyzes the anti-1,4-elimination of the C-3 phosphate and the C-6 proR hydrogen from 5-enolpyruvylshikimate-3-phosphate (EPSP) to yield chorismate, which is the branch point compound that serves as the starting substrate for the three terminal pathways of aromatic amino acid biosynthesis. This reaction introduces a second double bond into the aromatic ring system. This chain is Chorismate synthase, found in Acidovorax sp. (strain JS42).